We begin with the raw amino-acid sequence, 422 residues long: UDP-N-acetylglucosamine 1-carboxyvinyltransferase (422 aa).

22–23 contributes to the phosphoenolpyruvate binding site; it reads KN. Arginine 95 is a UDP-N-acetyl-alpha-D-glucosamine binding site. Catalysis depends on cysteine 119, which acts as the Proton donor. 2-(S-cysteinyl)pyruvic acid O-phosphothioketal is present on cysteine 119. Residues 124–128, aspartate 309, and valine 331 contribute to the UDP-N-acetyl-alpha-D-glucosamine site; that span reads RPIDQ.

It belongs to the EPSP synthase family. MurA subfamily.

Its subcellular location is the cytoplasm. The enzyme catalyses phosphoenolpyruvate + UDP-N-acetyl-alpha-D-glucosamine = UDP-N-acetyl-3-O-(1-carboxyvinyl)-alpha-D-glucosamine + phosphate. It participates in cell wall biogenesis; peptidoglycan biosynthesis. Cell wall formation. Adds enolpyruvyl to UDP-N-acetylglucosamine. The protein is UDP-N-acetylglucosamine 1-carboxyvinyltransferase of Anaeromyxobacter dehalogenans (strain 2CP-C).